A 118-amino-acid polypeptide reads, in one-letter code: Ribonuclease P protein component (118 aa).

Belongs to the RnpA family. As to quaternary structure, consists of a catalytic RNA component (M1 or rnpB) and a protein subunit.

The catalysed reaction is Endonucleolytic cleavage of RNA, removing 5'-extranucleotides from tRNA precursor.. Its function is as follows. RNaseP catalyzes the removal of the 5'-leader sequence from pre-tRNA to produce the mature 5'-terminus. It can also cleave other RNA substrates such as 4.5S RNA. The protein component plays an auxiliary but essential role in vivo by binding to the 5'-leader sequence and broadening the substrate specificity of the ribozyme. The chain is Ribonuclease P protein component from Photobacterium profundum (strain SS9).